We begin with the raw amino-acid sequence, 295 residues long: MSTANPETPNSTISREASTQSSSAATSQGYILPEGKIMPNTVFVGGIDVRMDETEIRSFFARYGSVKEVKIITDRTGVSKGYGFVSFFNDVDVQKIVESQINFHGKKLKLGPAIRKQNLCAYHVQPRPLVFNHPPPPQFQNVWTNPNTETYMQPTTTMNPITQYVQAYPTYPNSPVQVITGYQLPVYNYQMPPQWPVGEQRSYVVPPAYSAVNYHCNEVDPGAEVVPNECSVHEATPPSGNGPQKKSVDRSIQTVVSCLFNPENRLRNSVVTQDDYFKDKRVHHFRRSRAMLKSV.

Residues 1 to 10 (MSTANPETPN) are compositionally biased toward polar residues. A disordered region spans residues 1–25 (MSTANPETPNSTISREASTQSSSAA). The span at 11–25 (STISREASTQSSSAA) shows a compositional bias: low complexity. The RRM domain occupies 40–115 (NTVFVGGIDV…KKLKLGPAIR (76 aa)). Residues 80 to 132 (KGYGFVSFFNDVDVQKIVESQINFHGKKLKLGPAIRKQNLCAYHVQPRPLVFN) form a homodimerization region. The DAZ domain occupies 167 to 190 (AYPTYPNSPVQVITGYQLPVYNYQ). The residue at position 276 (Tyr276) is a Phosphotyrosine.

It belongs to the RRM DAZ family. Homodimer and heterodimer. Multiple DAZL RRMs can bind to a single RNA containing multiple GUU triplets. Forms a heterodimer with DAZ. Interacts with BOLL, DAZAP1 and DAZAP2. Interacts with PUM2. As to expression, testis specific.

It is found in the cytoplasm. Its subcellular location is the nucleus. Its function is as follows. RNA-binding protein, which is essential for gametogenesis in both males and females. Plays a central role during spermatogenesis. Acts by binding to the 3'-UTR of mRNA, specifically recognizing GUU triplets, and thereby regulating the translation of key transcripts. The chain is Deleted in azoospermia-like (DAZL) from Homo sapiens (Human).